We begin with the raw amino-acid sequence, 26 residues long: Melittin (26 aa).

Glycine 1 carries the post-translational modification N-formylglycine; partial. Position 26 is a glutamic acid 1-amide (glutamate 26).

The protein belongs to the melittin family. As to quaternary structure, monomer (in solution and for integration into membranes), homotetramer (in solution and potentially as a toroidal pore in membranes), and potenially homomultimer (as a toroidal pore in membranes). As to expression, expressed by the venom gland.

It is found in the secreted. The protein localises to the target cell membrane. Functionally, main toxin of bee venom with strong hemolytic activity and antimicrobial activity. It has enhancing effects on bee venom phospholipase A2 activity. This amphipathic toxin binds to negatively charged membrane surface and forms pore by inserting into lipid bilayers inducing the leakage of ions and molecules and the enhancement of permeability that ultimately leads to cell lysis. It acts as a voltage-gated pore with higher selectivity for anions over cations. The ion conductance has been shown to be voltage-dependent. Self-association of melittin in membranes is promoted by high ionic strength, but not by the presence of negatively charged lipids. In vivo, intradermal injection into healthy human volunteers produce sharp pain sensation and an inflammatory response. It produces pain by activating primary nociceptor cells directly and indirectly due to its ability to activate plasma membrane phospholipase A2 and its pore-forming activity. This chain is Melittin (MELT), found in Apis dorsata (Giant honeybee).